Consider the following 142-residue polypeptide: Transcriptional regulator MraZ (142 aa).

2 consecutive SpoVT-AbrB domains span residues 5–47 and 76–119; these read EFTH…PLNE and ATDC…SAER.

It belongs to the MraZ family. Forms oligomers.

The protein localises to the cytoplasm. The protein resides in the nucleoid. This chain is Transcriptional regulator MraZ, found in Limosilactobacillus reuteri (strain DSM 20016) (Lactobacillus reuteri).